The primary structure comprises 295 residues: Small ribosomal subunit biogenesis GTPase RsgA (295 aa).

The region spanning 68-228 (KNLLTKPHVA…VVDTPGFANL (161 aa)) is the CP-type G domain. GTP-binding positions include 117–120 (NKMD) and 170–178 (GLSGVGKSS). 4 residues coordinate Zn(2+): Cys-250, Cys-255, His-257, and Cys-263.

It belongs to the TRAFAC class YlqF/YawG GTPase family. RsgA subfamily. As to quaternary structure, monomer. Associates with 30S ribosomal subunit, binds 16S rRNA. It depends on Zn(2+) as a cofactor.

It localises to the cytoplasm. Its function is as follows. One of several proteins that assist in the late maturation steps of the functional core of the 30S ribosomal subunit. Helps release RbfA from mature subunits. May play a role in the assembly of ribosomal proteins into the subunit. Circularly permuted GTPase that catalyzes slow GTP hydrolysis, GTPase activity is stimulated by the 30S ribosomal subunit. This is Small ribosomal subunit biogenesis GTPase RsgA from Thermotoga maritima (strain ATCC 43589 / DSM 3109 / JCM 10099 / NBRC 100826 / MSB8).